The primary structure comprises 282 residues: Pantothenate synthetase (282 aa).

30–37 (MGYLHEGH) contributes to the ATP binding site. Residue H37 is the Proton donor of the active site. A (R)-pantoate-binding site is contributed by Q61. Q61 serves as a coordination point for beta-alanine. 147–150 (GMKD) is a binding site for ATP. (R)-pantoate is bound at residue Q153. Residues V176 and 184 to 187 (KSSR) contribute to the ATP site.

It belongs to the pantothenate synthetase family. As to quaternary structure, homodimer.

It localises to the cytoplasm. It catalyses the reaction (R)-pantoate + beta-alanine + ATP = (R)-pantothenate + AMP + diphosphate + H(+). The protein operates within cofactor biosynthesis; (R)-pantothenate biosynthesis; (R)-pantothenate from (R)-pantoate and beta-alanine: step 1/1. In terms of biological role, catalyzes the condensation of pantoate with beta-alanine in an ATP-dependent reaction via a pantoyl-adenylate intermediate. The sequence is that of Pantothenate synthetase from Geobacillus sp. (strain WCH70).